The following is a 257-amino-acid chain: ADP-dependent (S)-NAD(P)H-hydrate dehydratase (257 aa).

The region spanning 1–257 is the YjeF C-terminal domain; the sequence is MGRLQRTLSN…VIERIPDTIR (257 aa). Glycine 200 serves as a coordination point for AMP. Residue aspartate 201 participates in (6S)-NADPHX binding.

It belongs to the NnrD/CARKD family. As to quaternary structure, homotetramer. Mg(2+) serves as cofactor.

The enzyme catalyses (6S)-NADHX + ADP = AMP + phosphate + NADH + H(+). It catalyses the reaction (6S)-NADPHX + ADP = AMP + phosphate + NADPH + H(+). Catalyzes the dehydration of the S-form of NAD(P)HX at the expense of ADP, which is converted to AMP. Together with NAD(P)HX epimerase, which catalyzes the epimerization of the S- and R-forms, the enzyme allows the repair of both epimers of NAD(P)HX, a damaged form of NAD(P)H that is a result of enzymatic or heat-dependent hydration. This Haloterrigena turkmenica (strain ATCC 51198 / DSM 5511 / JCM 9101 / NCIMB 13204 / VKM B-1734 / 4k) (Halococcus turkmenicus) protein is ADP-dependent (S)-NAD(P)H-hydrate dehydratase.